Consider the following 337-residue polypeptide: Hsp90 co-chaperone Cdc37-like 1 (337 aa).

Residues 1-11 (MEQPWPPPGPW) are compositionally biased toward pro residues. The tract at residues 1–40 (MEQPWPPPGPWSLPRAEGEAEEESDFDVFPSSPRCPQLPG) is disordered. Residues 2–171 (EQPWPPPGPW…YEQKIRHFGM (170 aa)) are self-association. Residues S32 and S88 each carry the phosphoserine modification. Residues 84–122 (HNSESLDQEHAKAQTAVSELRQREEEWRQKEEALVQREK) are a coiled coil. Positions 147–277 (KDTEDEDKSE…SRVRLYSQSQ (131 aa)) are self-association and interaction with Hsp90. Residues 267-337 (KSRVRLYSQS…DDEPKMMDTV (71 aa)) are interaction with Hsp70. Residues 278 to 337 (SFQPMTVQNHVPHSGVGSIGLLESLPQNPDYLQYSISTALCSLNSVVHKEDDEPKMMDTV) form a required for interaction with STIP1 region.

It belongs to the CDC37 family. In terms of assembly, self-associates. Forms complexes with Hsp70 and Hsp90. Interacts with CDC37, FKBP4, PPID and STIP1. Expressed in brain, heart, kidney, liver, placenta and skeletal muscle.

It is found in the cytoplasm. In terms of biological role, co-chaperone that binds to numerous proteins and promotes their interaction with Hsp70 and Hsp90. This chain is Hsp90 co-chaperone Cdc37-like 1 (CDC37L1), found in Homo sapiens (Human).